The chain runs to 258 residues: Triosephosphate isomerase (258 aa).

9-11 (NWK) lines the substrate pocket. The Electrophile role is filled by His-95. Glu-167 functions as the Proton acceptor in the catalytic mechanism. Substrate contacts are provided by Gly-173 and Ser-212.

Belongs to the triosephosphate isomerase family. As to quaternary structure, homodimer.

It localises to the cytoplasm. It carries out the reaction D-glyceraldehyde 3-phosphate = dihydroxyacetone phosphate. It participates in carbohydrate biosynthesis; gluconeogenesis. The protein operates within carbohydrate degradation; glycolysis; D-glyceraldehyde 3-phosphate from glycerone phosphate: step 1/1. Its function is as follows. Involved in the gluconeogenesis. Catalyzes stereospecifically the conversion of dihydroxyacetone phosphate (DHAP) to D-glyceraldehyde-3-phosphate (G3P). In Blochmanniella pennsylvanica (strain BPEN), this protein is Triosephosphate isomerase.